We begin with the raw amino-acid sequence, 312 residues long: HPr kinase/phosphorylase (312 aa).

Active-site residues include histidine 139 and lysine 160. Glycine 154–serine 161 contributes to the ATP binding site. Serine 161 provides a ligand contact to Mg(2+). Residue aspartate 178 is the Proton acceptor; for phosphorylation activity. Proton donor; for dephosphorylation activity of the active site. The tract at residues isoleucine 202 to aspartate 211 is important for the catalytic mechanism of both phosphorylation and dephosphorylation. Glutamate 203 contributes to the Mg(2+) binding site. Arginine 244 is a catalytic residue. An important for the catalytic mechanism of dephosphorylation region spans residues proline 265–arginine 270.

The protein belongs to the HPrK/P family. As to quaternary structure, homohexamer. Mg(2+) serves as cofactor.

The catalysed reaction is [HPr protein]-L-serine + ATP = [HPr protein]-O-phospho-L-serine + ADP + H(+). It carries out the reaction [HPr protein]-O-phospho-L-serine + phosphate + H(+) = [HPr protein]-L-serine + diphosphate. Functionally, catalyzes the ATP- as well as the pyrophosphate-dependent phosphorylation of a specific serine residue in HPr, a phosphocarrier protein of the phosphoenolpyruvate-dependent sugar phosphotransferase system (PTS). HprK/P also catalyzes the pyrophosphate-producing, inorganic phosphate-dependent dephosphorylation (phosphorolysis) of seryl-phosphorylated HPr (P-Ser-HPr). The two antagonistic activities of HprK/P are regulated by several intracellular metabolites, which change their concentration in response to the absence or presence of rapidly metabolisable carbon sources (glucose, fructose, etc.) in the growth medium. Therefore, by controlling the phosphorylation state of HPr, HPrK/P is a sensor enzyme that plays a major role in the regulation of carbon metabolism and sugar transport: it mediates carbon catabolite repression (CCR), and regulates PTS-catalyzed carbohydrate uptake and inducer exclusion. The polypeptide is HPr kinase/phosphorylase (Streptococcus pneumoniae (strain ATCC BAA-255 / R6)).